A 95-amino-acid polypeptide reads, in one-letter code: Small ribosomal subunit protein bS6 (95 aa).

It belongs to the bacterial ribosomal protein bS6 family.

In terms of biological role, binds together with bS18 to 16S ribosomal RNA. The protein is Small ribosomal subunit protein bS6 of Corynebacterium urealyticum (strain ATCC 43042 / DSM 7109).